Here is a 396-residue protein sequence, read N- to C-terminus: L-lactate dehydrogenase (396 aa).

One can recognise an FMN hydroxy acid dehydrogenase domain in the interval 1–380 (MIISAASDYR…SGDSLVQELG (380 aa)). A substrate-binding site is contributed by Y24. Residues S106 and Q127 each contribute to the FMN site. Position 129 (Y129) interacts with substrate. Residue T155 coordinates FMN. R164 provides a ligand contact to substrate. Residue K251 coordinates FMN. H275 acts as the Proton acceptor in catalysis. R278 contributes to the substrate binding site. 306–330 (DSGIRNGLDVVRMIALGADTVLLGR) contacts FMN.

Belongs to the FMN-dependent alpha-hydroxy acid dehydrogenase family. FMN is required as a cofactor.

It is found in the cell inner membrane. It catalyses the reaction (S)-lactate + A = pyruvate + AH2. In terms of biological role, catalyzes the conversion of L-lactate to pyruvate. Is coupled to the respiratory chain. This Salmonella paratyphi A (strain ATCC 9150 / SARB42) protein is L-lactate dehydrogenase.